The chain runs to 529 residues: Peptide chain release factor 3 (529 aa).

The region spanning 11–280 (AKRRTFAIIS…GLVEWAPAPM (270 aa)) is the tr-type G domain. GTP-binding positions include 20–27 (SHPDAGKT), 88–92 (DTPGH), and 142–145 (NKLD).

Belongs to the TRAFAC class translation factor GTPase superfamily. Classic translation factor GTPase family. PrfC subfamily.

Its subcellular location is the cytoplasm. Functionally, increases the formation of ribosomal termination complexes and stimulates activities of RF-1 and RF-2. It binds guanine nucleotides and has strong preference for UGA stop codons. It may interact directly with the ribosome. The stimulation of RF-1 and RF-2 is significantly reduced by GTP and GDP, but not by GMP. This chain is Peptide chain release factor 3, found in Shigella boydii serotype 18 (strain CDC 3083-94 / BS512).